The following is a 736-amino-acid chain: Elongation factor 2 (736 aa).

The tr-type G domain maps to glutamate 18–arginine 261. Residues alanine 27–threonine 34, aspartate 93–histidine 97, and asparagine 147–aspartate 150 each bind GTP. At histidine 602 the chain carries Diphthamide.

This sequence belongs to the TRAFAC class translation factor GTPase superfamily. Classic translation factor GTPase family. EF-G/EF-2 subfamily.

Its subcellular location is the cytoplasm. Catalyzes the GTP-dependent ribosomal translocation step during translation elongation. During this step, the ribosome changes from the pre-translocational (PRE) to the post-translocational (POST) state as the newly formed A-site-bound peptidyl-tRNA and P-site-bound deacylated tRNA move to the P and E sites, respectively. Catalyzes the coordinated movement of the two tRNA molecules, the mRNA and conformational changes in the ribosome. This is Elongation factor 2 from Staphylothermus marinus (strain ATCC 43588 / DSM 3639 / JCM 9404 / F1).